We begin with the raw amino-acid sequence, 287 residues long: ATP synthase gamma chain (287 aa).

Belongs to the ATPase gamma chain family. F-type ATPases have 2 components, CF(1) - the catalytic core - and CF(0) - the membrane proton channel. CF(1) has five subunits: alpha(3), beta(3), gamma(1), delta(1), epsilon(1). CF(0) has three main subunits: a, b and c.

It localises to the cell inner membrane. Functionally, produces ATP from ADP in the presence of a proton gradient across the membrane. The gamma chain is believed to be important in regulating ATPase activity and the flow of protons through the CF(0) complex. This Shigella sonnei (strain Ss046) protein is ATP synthase gamma chain.